A 404-amino-acid polypeptide reads, in one-letter code: Protein translocase subunit SecF (404 aa).

A run of 6 helical transmembrane segments spans residues 15 to 35, 225 to 245, 246 to 266, 275 to 295, 327 to 347, and 355 to 375; these read KWYFLAFSLVFSVAGLISMGA, LLATLYSLGGMLVYLWFRFEL, IYGIGAVVACFHDTIITVGAF, LTVVAAILTLIGYSMNDTIVV, ILTSGLTFLTVLSLYVFGGEV, and LVIGILIGTYSSIAVAAPMLV.

It belongs to the SecD/SecF family. SecF subfamily. As to quaternary structure, forms a complex with SecD. Part of the essential Sec protein translocation apparatus which comprises SecA, SecYEG and auxiliary proteins SecDF. Other proteins may also be involved.

Its subcellular location is the cell inner membrane. Part of the Sec protein translocase complex. Interacts with the SecYEG preprotein conducting channel. SecDF uses the proton motive force (PMF) to complete protein translocation after the ATP-dependent function of SecA. The polypeptide is Protein translocase subunit SecF (Koribacter versatilis (strain Ellin345)).